A 286-amino-acid polypeptide reads, in one-letter code: Digeranylgeranylglyceryl phosphate synthase (286 aa).

8 consecutive transmembrane segments (helical) span residues 21 to 41 (AVAA…FAVT), 42 to 62 (TAHV…GNAI), 96 to 116 (FLFV…IVLA), 133 to 155 (LPGV…GAAA), 162 to 181 (FGVV…REII), 214 to 234 (VLLV…FGIW), 235 to 255 (YLTL…QAPD), and 266 to 286 (RGMF…VAGI).

Belongs to the UbiA prenyltransferase family. DGGGP synthase subfamily. Mg(2+) serves as cofactor.

It localises to the cell membrane. It catalyses the reaction sn-3-O-(geranylgeranyl)glycerol 1-phosphate + (2E,6E,10E)-geranylgeranyl diphosphate = 2,3-bis-O-(geranylgeranyl)-sn-glycerol 1-phosphate + diphosphate. The protein operates within membrane lipid metabolism; glycerophospholipid metabolism. Prenyltransferase that catalyzes the transfer of the geranylgeranyl moiety of geranylgeranyl diphosphate (GGPP) to the C2 hydroxyl of (S)-3-O-geranylgeranylglyceryl phosphate (GGGP). This reaction is the second ether-bond-formation step in the biosynthesis of archaeal membrane lipids. The polypeptide is Digeranylgeranylglyceryl phosphate synthase (Haloquadratum walsbyi (strain DSM 16790 / HBSQ001)).